The chain runs to 761 residues: Proton-coupled zinc antiporter SLC30A5 (761 aa).

M1 is subject to N-acetylmethionine. Residues 1–29 (MEEKYGGDARPGPGGGLGPVDVPSARLTR) lie on the Cytoplasmic side of the membrane. A helical transmembrane segment spans residues 30–46 (YILLLCLTKCLKAVGLF). Topologically, residues 47–54 (ESYDLLKA) are lumenal. A helical transmembrane segment spans residues 55 to 75 (VHIVQFIFILKLGTAFFMVLF). The Cytoplasmic portion of the chain corresponds to 76 to 96 (QKPFSSGKPITKHQWIKIFKH). A helical transmembrane segment spans residues 97-117 (AVAGCIISLLWFFGLTLCGPL). Position 118 (R118) is a topological domain, lumenal. Residues 119-139 (TLLLFEHSDIVVISLLSVLFT) form a helical membrane-spanning segment. The Cytoplasmic portion of the chain corresponds to 140–150 (SSGGGPAKTRG). The helical transmembrane segment at 151–171 (AAFFIIAVICLLLFDNDDLMA) threads the bilayer. Over 172-191 (KMAEHPEGHHDSALTHMLYT) the chain is Lumenal. Residues 192-212 (AIAFLGVADHKGGVLLLVLAL) form a helical membrane-spanning segment. Residues 213 to 236 (CCKVGFHTASRKLSIDVGGAKRLQ) are Cytoplasmic-facing. Residues 237–257 (ALSQLVSVFLLCPWVIVLSVT) traverse the membrane as a helical segment. Topologically, residues 258-264 (TESKVES) are lumenal. The chain crosses the membrane as a helical span at residues 265 to 285 (WFSLIMPFTTVIFFVMILDFY). Topologically, residues 286–301 (MDSVCSVKMDVSKCAR) are cytoplasmic. Residues 302–322 (YGSFPIFISALLFGNFWTHPI) form a helical membrane-spanning segment. The Lumenal segment spans residues 323–340 (TDQLRAMNRAAHQESTEH). A helical membrane pass occupies residues 341–361 (VLSGGVVVSAVFFILSANILS). Over 362 to 416 (SPSKRGQKGTLIGYSPEGTPLYHFMGDAFQHSSQSVPRFIKDSLKQVLEESDSRQ) the chain is Cytoplasmic. A helical transmembrane segment spans residues 417–437 (IFYFLCLNLLFTFVELFYGVL). The segment at 418-636 (FYFLCLNLLF…VLIFLSVIPL (219 aa)) is mediates homodimerization with SLC30A6. The Lumenal segment spans residues 438-446 (TNSLGLISD). Residues 447 to 467 (GFHMLFDCSALVMGLFAALMS) form a helical membrane-spanning segment. Residues H449 and D453 each contribute to the Zn(2+) site. The Cytoplasmic segment spans residues 468–481 (RWKATRIFSYGYGR). Residues 482–502 (IEILSGFINGLFLIVIAFFVF) traverse the membrane as a helical segment. Residues 503–518 (MESVARLIDPPELDTN) are Lumenal-facing. Residues 519-539 (MLTPVSVGGLIVNLIGICAFS) form a helical membrane-spanning segment. Positions 540 to 574 (HAHSHGHGASQGNCHSDHGHSHHAHGHGHDHGHSH) are his-rich loop; required for zinc transport. Topologically, residues 540-588 (HAHSHGHGASQGNCHSDHGHSHHAHGHGHDHGHSHGFTGGGMNANMRGV) are cytoplasmic. The disordered stretch occupies residues 549-576 (SQGNCHSDHGHSHHAHGHGHDHGHSHGF). The helical transmembrane segment at 589-609 (FLHVLADTLGSIGVIVSTVLI) threads the bilayer. Zn(2+)-binding residues include H591 and D595. At 610–613 (EQFG) the chain is on the lumenal side. The helical transmembrane segment at 614–634 (WFIADPLCSLFIAVLIFLSVI) threads the bilayer. At 635-761 (PLIKDACQVL…KYCKDGTYIM (127 aa)) the chain is on the cytoplasmic side.

This sequence belongs to the cation diffusion facilitator (CDF) transporter (TC 2.A.4) family. SLC30A subfamily. As to quaternary structure, heterodimer with SLC30A6/ZNT6; form a functional zinc ion transmembrane transporter. In terms of processing, could homodimerize through the formation of dityrosine bonds upon oxidative stress. Ubiquitously expressed.

The protein resides in the golgi apparatus. Its subcellular location is the golgi stack membrane. It localises to the cytoplasmic vesicle. The protein localises to the COPII-coated vesicle membrane. It is found in the secretory vesicle membrane. The protein resides in the trans-Golgi network membrane. The catalysed reaction is Zn(2+)(in) + 2 H(+)(out) = Zn(2+)(out) + 2 H(+)(in). Functionally, together with SLC30A6 forms a functional proton-coupled zinc ion antiporter mediating zinc entry into the lumen of organelles along the secretory pathway. By contributing to zinc ion homeostasis within the early secretory pathway, regulates the activation and folding of enzymes like alkaline phosphatases and enzymes involved in phosphatidylinositol glycan anchor biosynthesis. Through the transport of zinc into secretory granules of pancreatic beta-cells, plays an important role in the storage and secretion of insulin. This chain is Proton-coupled zinc antiporter SLC30A5, found in Mus musculus (Mouse).